The chain runs to 166 residues: Regulator of ribonuclease activity A (166 aa).

Belongs to the RraA family. Homotrimer. Binds to both RNA-binding sites in the C-terminal region of Rne and to RhlB.

The protein resides in the cytoplasm. Its function is as follows. Globally modulates RNA abundance by binding to RNase E (Rne) and regulating its endonucleolytic activity. Can modulate Rne action in a substrate-dependent manner by altering the composition of the degradosome. Modulates RNA-binding and helicase activities of the degradosome. This chain is Regulator of ribonuclease activity A, found in Actinobacillus succinogenes (strain ATCC 55618 / DSM 22257 / CCUG 43843 / 130Z).